A 932-amino-acid chain; its full sequence is 2-oxoglutarate dehydrogenase E1 component (932 aa).

The protein belongs to the alpha-ketoglutarate dehydrogenase family. Homodimer. Part of the 2-oxoglutarate dehydrogenase (OGDH) complex composed of E1 (2-oxoglutarate dehydrogenase), E2 (dihydrolipoamide succinyltransferase) and E3 (dihydrolipoamide dehydrogenase); the complex contains multiple copies of the three enzymatic components (E1, E2 and E3). Requires thiamine diphosphate as cofactor.

The catalysed reaction is N(6)-[(R)-lipoyl]-L-lysyl-[protein] + 2-oxoglutarate + H(+) = N(6)-[(R)-S(8)-succinyldihydrolipoyl]-L-lysyl-[protein] + CO2. Its function is as follows. E1 component of the 2-oxoglutarate dehydrogenase (OGDH) complex which catalyzes the decarboxylation of 2-oxoglutarate, the first step in the conversion of 2-oxoglutarate to succinyl-CoA and CO(2). In Staphylococcus aureus (strain MW2), this protein is 2-oxoglutarate dehydrogenase E1 component.